Here is a 316-residue protein sequence, read N- to C-terminus: Homoserine kinase (316 aa).

Position 97–107 (P97–S107) interacts with ATP.

This sequence belongs to the GHMP kinase family. Homoserine kinase subfamily.

The protein localises to the cytoplasm. It carries out the reaction L-homoserine + ATP = O-phospho-L-homoserine + ADP + H(+). It participates in amino-acid biosynthesis; L-threonine biosynthesis; L-threonine from L-aspartate: step 4/5. Catalyzes the ATP-dependent phosphorylation of L-homoserine to L-homoserine phosphate. This is Homoserine kinase from Prochlorococcus marinus (strain MIT 9303).